A 505-amino-acid chain; its full sequence is Holliday junction branch migration ATPase PINA (505 aa).

The PINc domain maps to 2–106; that stretch reads NDLMLDKSAL…IVTADETQKK (105 aa). Residues 434 to 505 form a KH domain region; it reads PVNRGITMSN…NIKIKIKLSD (72 aa). Residues 493-505 form a required for maximum interaction with Hjc and Hjm region; sequence KKNNIKIKIKLSD.

In terms of assembly, homohexamer; the central pore (25-31 Angstroms) is large enough to hold dsDNA. In PDB:5F4H two of the 6 subunits are in an ATP-binding competent conformation. Interacts with Holliday junction resolvase Hjc; in the presence of HJ DNA this interaction decreases branch migration but not Y-DNA unwinding. Interacts with helicase Hjm (hel308) which decreases the DNA helicase activity of Hjm. Ca(2+) serves as cofactor.

It catalyses the reaction ATP + H2O = ADP + phosphate + H(+). Its function is as follows. Promotes Holliday junction (HJ) branch migration and unwinds Y-shaped DNA (but not replication forks or dsDNA) in an ATP hydrolysis-dependent manner. Stimulates cleavage by HJ resolvase Hjc. Unwinds Y-shaped and 3'-flap DNA substrates. In the absence of other proteins stabilizes replication forks (prevents spontaneous unwinding); Hjc, Hjm (Hel308) and PINA coordinate HJ migration and cleavage of replication forks in a coordinated way. Inhibits the 5'-3' (but not 3'-5') helicase activity of helicase Hjm (Hel308) on overhang DNA. Probably acts as an ATP-dependent pump that pulls DNA through the hexamer. The sequence is that of Holliday junction branch migration ATPase PINA from Saccharolobus islandicus (strain REY15A) (Sulfolobus islandicus).